A 585-amino-acid polypeptide reads, in one-letter code: MSQQHTLPVTLSPALSQELLKTVPPPVNTHQEQMKQPTPLPPPCQKVPVELPVEVPSKQEEKHMTAVKGLPEQECEQQQKEPQEQELQQQHWEQHEEYQKAENPEQQLKQEKTQRDQQLNKQLEEEKKLLDQQLDQELVKRDEQLGMKKEQLLELPEQQEGHLKHLEQQEGQLKHPEQQEGQLELPEQQEGQLELPEQQEGQLELPEQQEGQLELPEQQEGQLELPEQQEGQLELPQQQEGQLELSEQQEGQLELSEQQEGQLKHLEHQEGQLEVPEEQMGQLKYLEQQEGQLKHLDQQEKQPELPEQQMGQLKHLEQQEGQPKHLEQQEGQLEQLEEQEGQLKHLEQQEGQLEHLEHQEGQLGLPEQQVLQLKQLEKQQGQPKHLEEEEGQLKHLVQQEGQLKHLVQQEGQLEQQERQVEHLEQQVGQLKHLEEQEGQLKHLEQQQGQLEVPEQQVGQPKNLEQEEKQLELPEQQEGQVKHLEKQEAQLELPEQQVGQPKHLEQQEKHLEHPEQQDGQLKHLEQQEGQLKDLEQQKGQLEQPVFAPAPGQVQDIQPALPTKGEVLLPVEHQQQKQEVQWPPKHK.

The segment covering 1–15 (MSQQHTLPVTLSPAL) has biased composition (polar residues). Positions 1–132 (MSQQHTLPVT…LEEEKKLLDQ (132 aa)) are disordered. Glutamine 79 carries the Omega-hydroxyceramide glutamate ester lipid modification. Over residues 92–115 (WEQHEEYQKAENPEQQLKQEKTQR) the composition is skewed to basic and acidic residues. 2 omega-hydroxyceramide glutamate ester lipidation sites follow: glutamine 118 and glutamine 133. Residues 149–540 (KEQLLELPEQ…KDLEQQKGQL (392 aa)) are disordered. Repeat copies occupy residues 153–162 (LELPEQQEGH), 163–172 (LKHLEQQEGQ), 173–182 (LKHPEQQEGQ), 183–192 (LELPEQQEGQ), 193–202 (LELPEQQEGQ), 203–212 (LELPEQQEGQ), 213–222 (LELPEQQEGQ), 223–232 (LELPEQQEGQ), 233–242 (LELPQQQEGQ), 243–252 (LELSEQQEGQ), 253–262 (LELSEQQEGQ), 263–272 (LKHLEHQEGQ), 273–282 (LEVPEEQMGQ), 283–292 (LKYLEQQEGQ), 293–302 (LKHLDQQEKQ), 303–312 (PELPEQQMGQ), 313–322 (LKHLEQQEGQ), 323–332 (PKHLEQQEGQ), 333–342 (LEQLEEQEGQ), 343–352 (LKHLEQQEGQ), 353–362 (LEHLEHQEGQ), 363–372 (LGLPEQQVLQ), and 373–382 (LKQLEKQQGQ). Positions 153–542 (LELPEQQEGH…LEQQKGQLEQ (390 aa)) are 39 X 10 AA approximate tandem repeats of [LP]-[EKG]-[LHVYQEK]-[PLSQE]-[EQDV]-[QHEKRGA]-Q-[EMVQLP]-[GKLE]-[QHVNLD]. Over residues 159 to 178 (QEGHLKHLEQQEGQLKHPEQ) the composition is skewed to basic and acidic residues. Positions 179-261 (QEGQLELPEQ…QLELSEQQEG (83 aa)) are enriched in low complexity. Basic and acidic residues predominate over residues 262–271 (QLKHLEHQEG). Composition is skewed to basic and acidic residues over residues 292–304 (QLKH…KQPE), 314–328 (KHLE…HLEQ), and 341–360 (GQLK…EHQE). The segment covering 361 to 383 (GQLGLPEQQVLQLKQLEKQQGQP) has biased composition (low complexity). The 24; approximate repeat unit spans residues 383–392 (PKHLEEEEGQ). The span at 384–393 (KHLEEEEGQL) shows a compositional bias: basic and acidic residues. 11 consecutive repeat copies span residues 393 to 402 (LKHLVQQEGQ), 403 to 412 (LKHLVQQEGQ), 413 to 422 (LEQQERQVEH), 423 to 432 (LEQQVGQLKH), 433 to 442 (LEEQEGQLKH), 443 to 452 (LEQQQGQLEV), 453 to 462 (PEQQVGQPKN), 463 to 472 (LEQEEKQLEL), 473 to 482 (PEQQEGQVKH), 483 to 492 (LEKQEAQLEL), and 493 to 502 (PEQQVGQPKH). 2 stretches are compositionally biased toward basic and acidic residues: residues 415-424 (QQERQVEHLE) and 431-444 (KHLE…KHLE). Residues 445–462 (QQQGQLEVPEQQVGQPKN) are compositionally biased toward low complexity. The span at 479–488 (QVKHLEKQEA) shows a compositional bias: basic and acidic residues. Residue glutamine 496 forms an Isoglutamyl lysine isopeptide (Gln-Lys) (interchain with K-? in other proteins) linkage. A compositionally biased stretch (basic and acidic residues) spans 501 to 535 (KHLEQQEKHLEHPEQQDGQLKHLEQQEGQLKDLEQ). One copy of the 36; approximate repeat lies at 503–512 (LEQQEKHLEH). 2 consecutive repeat copies span residues 513–522 (PEQQDGQLKH) and 523–532 (LEQQEGQLKD). The stretch at 533–542 (LEQQKGQLEQ) is one 39; approximate repeat.

It belongs to the involucrin family. In terms of assembly, directly or indirectly cross-linked to cornifelin (CNFN). Post-translationally, substrate of transglutaminase. Some glutamines and lysines are cross-linked to other involucrin molecules, to other proteins such as keratin, desmoplakin, periplakin and envoplakin, and to lipids like omega-hydroxyceramide. In terms of tissue distribution, keratinocytes of epidermis and other stratified squamous epithelia.

It localises to the cytoplasm. In terms of biological role, part of the insoluble cornified cell envelope (CE) of stratified squamous epithelia. In Homo sapiens (Human), this protein is Involucrin (IVL).